Consider the following 145-residue polypeptide: Bacilliredoxin SERP1006 (145 aa).

Belongs to the bacilliredoxin family.

The polypeptide is Bacilliredoxin SERP1006 (Staphylococcus epidermidis (strain ATCC 35984 / DSM 28319 / BCRC 17069 / CCUG 31568 / BM 3577 / RP62A)).